Consider the following 436-residue polypeptide: Histidinol dehydrogenase (436 aa).

NAD(+) contacts are provided by Tyr136, Gln198, and Asn221. Positions 244, 266, and 269 each coordinate substrate. Zn(2+) contacts are provided by Gln266 and His269. Active-site proton acceptor residues include Glu334 and His335. Substrate-binding residues include His335, Asp368, Glu422, and His427. Asp368 contacts Zn(2+). His427 lines the Zn(2+) pocket.

Belongs to the histidinol dehydrogenase family. Zn(2+) serves as cofactor.

It carries out the reaction L-histidinol + 2 NAD(+) + H2O = L-histidine + 2 NADH + 3 H(+). It participates in amino-acid biosynthesis; L-histidine biosynthesis; L-histidine from 5-phospho-alpha-D-ribose 1-diphosphate: step 9/9. Its function is as follows. Catalyzes the sequential NAD-dependent oxidations of L-histidinol to L-histidinaldehyde and then to L-histidine. This Dehalococcoides mccartyi (strain CBDB1) protein is Histidinol dehydrogenase.